A 308-amino-acid polypeptide reads, in one-letter code: tRNA dimethylallyltransferase (308 aa).

14–21 (GPTASGKT) contributes to the ATP binding site. Residue 16–21 (TASGKT) participates in substrate binding. Interaction with substrate tRNA regions lie at residues 39–42 (DSAL), 163–167 (QRLSR), and 244–249 (RCVGYR).

Belongs to the IPP transferase family. Monomer. Mg(2+) is required as a cofactor.

It carries out the reaction adenosine(37) in tRNA + dimethylallyl diphosphate = N(6)-dimethylallyladenosine(37) in tRNA + diphosphate. Its function is as follows. Catalyzes the transfer of a dimethylallyl group onto the adenine at position 37 in tRNAs that read codons beginning with uridine, leading to the formation of N6-(dimethylallyl)adenosine (i(6)A). This chain is tRNA dimethylallyltransferase, found in Shewanella baltica (strain OS223).